Reading from the N-terminus, the 154-residue chain is uncharacterized protein (154 aa).

Transmembrane regions (helical) follow at residues 26–48 (VSGW…GVVT), 97–119 (IAMF…LIVF), and 132–150 (GLYT…YCAW).

The protein resides in the cell membrane. This is an uncharacterized protein from Archaeoglobus fulgidus (strain ATCC 49558 / DSM 4304 / JCM 9628 / NBRC 100126 / VC-16).